The chain runs to 881 residues: Leucine--tRNA ligase (881 aa).

The 'HIGH' region motif lies at 48–58 (PYPSGKLHMGH). A 'KMSKS' region motif is present at residues 638–642 (KMSKS). Lysine 641 is a binding site for ATP.

Belongs to the class-I aminoacyl-tRNA synthetase family.

Its subcellular location is the cytoplasm. The catalysed reaction is tRNA(Leu) + L-leucine + ATP = L-leucyl-tRNA(Leu) + AMP + diphosphate. This Janthinobacterium sp. (strain Marseille) (Minibacterium massiliensis) protein is Leucine--tRNA ligase.